The chain runs to 803 residues: MLMLMLAAVATVVRAQTVCRFRTVRTGKVFANPVTLEGDLLFYAFSNTVVVKNVCKTDIAVYLGQRVFITKNRFEASILPLTIPKSMEVKMPSITSAHFVSDAMILFVIDGKVYSYNFIEDIWRTVNGITEPVSHISGDPCCFEGYFCLELSNNLFAYFRGGQMPGTNIYFSNNGGFSFELLNSDRMSHLKGLLGGIFHFHSLSQVGILLVENNLGTFHYLEYPLNHSTGVPFLYESPLEVIIKPQQRGFLILWNQKTLLVSSNSGQIVEAMQLMEEGNINDLNVEHAKLTIHSIASNTYELAFLVEQDQLYYGSQSYMGNYIIKLSNQQFWSEEASVHFWDVGMLEVLTPVSDPYFPAFDFKKCLVNVQLALMDQSLQLEPCNVEFLESTMEDRMFIIDMNSKLKLSALMVPRKGMNPTPLVMVSNPHALGFKANLTQFGNMYDGNSKFKLDIELQQQQHWGNSELNFTASIKHEAISSITVDIADKTLSCVDLKPLSTLISVGCDLTKKVIVQNKISACAMGILDPVLLQKNYSYTIEKEAYNPTSYSGEAQDDLIVFYQYKELGCPRLVYYDKPWKPVVELWKDGTLEEIMNAEYVILELNGIVTYSYSLTAATAHCRSQPQNWSIFKEDAEKPSLWNRETYVSCHEDNQDNPLLWPNVEYQILGGRTDNKIIFGQRNGIYTFYLTVVDPYYSYCDLNTIFSVYVYGALPVAEFRPMTSILLMVTVTLFTMWLAYAIPKQLRTERGRRLTGFCFQIFKYCPGICTCAWLRGKMRRGLRSRRVKDQPEKIPQIGKKPDIKK.

The signal sequence occupies residues 1 to 15 (MLMLMLAAVATVVRA). Over 16 to 720 (QTVCRFRTVR…ALPVAEFRPM (705 aa)) the chain is Extracellular. Cystine bridges form between C19-C365, C55-C142, C141-C148, C383-C492, C506-C698, C521-C568, and C620-C648. N-linked (GlcNAc...) asparagine glycosylation is found at N226, N418, N436, N468, N534, N545, and N626. The chain crosses the membrane as a helical span at residues 721-742 (TSILLMVTVTLFTMWLAYAIPK). Over 743–803 (QLRTERGRRL…QIGKKPDIKK (61 aa)) the chain is Cytoplasmic. Residues 782–803 (SRRVKDQPEKIPQIGKKPDIKK) form a disordered region.

This sequence belongs to the CATSPERD family. In terms of assembly, component of the CatSper complex or CatSpermasome composed of the core pore-forming members CATSPER1, CATSPER2, CATSPER3 and CATSPER4 as well as auxiliary members CATSPERB, CATSPERG, CATSPERD, CATSPERE, CATSPERZ, C2CD6/CATSPERT, SLCO6C1, TMEM249, TMEM262 and EFCAB9. HSPA1 may be an additional auxiliary complex member. The core complex members CATSPER1, CATSPER2, CATSPER3 and CATSPER4 form a heterotetrameric channel. The auxiliary CATSPERB, CATSPERG, CATSPERD and CATSPERE subunits form a pavilion-like structure over the pore which stabilizes the complex through interactions with CATSPER4, CATSPER3, CATSPER1 and CATSPER2 respectively. SLCO6C1 interacts with CATSPERE and TMEM262/CATSPERH interacts with CATSPERB, further stabilizing the complex. C2CD6/CATSPERT interacts at least with CATSPERD and is required for targeting the CatSper complex in the flagellar membrane.

Its subcellular location is the cell projection. The protein resides in the cilium. It is found in the flagellum membrane. Its function is as follows. Auxiliary component of the CatSper complex, a complex involved in sperm cell hyperactivation. Sperm cell hyperactivation is needed for sperm motility which is essential late in the preparation of sperm for fertilization. Required for CATSPER1 stability before intraflagellar transport and/or incorporation of the CatSper complex channel into the flagellar membrane. The chain is Cation channel sperm-associated auxiliary subunit delta from Rattus norvegicus (Rat).